The following is a 443-amino-acid chain: D-serine dehydratase (443 aa).

N6-(pyridoxal phosphate)lysine is present on Lys-118.

This sequence belongs to the serine/threonine dehydratase family. DsdA subfamily. In terms of assembly, monomer. Pyridoxal 5'-phosphate is required as a cofactor.

It catalyses the reaction D-serine = pyruvate + NH4(+). This chain is D-serine dehydratase, found in Photorhabdus laumondii subsp. laumondii (strain DSM 15139 / CIP 105565 / TT01) (Photorhabdus luminescens subsp. laumondii).